The sequence spans 359 residues: Maleylacetate reductase 2 (359 aa).

The protein belongs to the iron-containing alcohol dehydrogenase family. As to quaternary structure, homodimer.

The enzyme catalyses 3-oxoadipate + NAD(+) = maleylacetate + NADH + H(+). The catalysed reaction is 3-oxoadipate + NADP(+) = maleylacetate + NADPH + H(+). It participates in aromatic compound metabolism; 3-chlorocatechol degradation. Its activity is regulated as follows. Inhibited by p-chloromercuribenzoate and by 3-oxoadipate, and, in a temperature-dependent manner, by manganese. Its function is as follows. Plays a major role in the degradation of chloroaromatic compounds by channeling maleylacetate and some of its substituted derivatives into the 3-oxoadipate pathway. This enzyme converts maleylacetate and 2-chloromaleylacetate with similar efficiencies. NADH is preferred to NADPH as the cosubstrate. The sequence is that of Maleylacetate reductase 2 (tfdFII) from Cupriavidus pinatubonensis (strain JMP 134 / LMG 1197) (Cupriavidus necator (strain JMP 134)).